The chain runs to 70 residues: Small ribosomal subunit protein bS21B (70 aa).

This sequence belongs to the bacterial ribosomal protein bS21 family.

The sequence is that of Small ribosomal subunit protein bS21B from Paraburkholderia xenovorans (strain LB400).